A 415-amino-acid polypeptide reads, in one-letter code: Gamma-glutamyl phosphate reductase (415 aa).

The protein belongs to the gamma-glutamyl phosphate reductase family.

The protein resides in the cytoplasm. The enzyme catalyses L-glutamate 5-semialdehyde + phosphate + NADP(+) = L-glutamyl 5-phosphate + NADPH + H(+). The protein operates within amino-acid biosynthesis; L-proline biosynthesis; L-glutamate 5-semialdehyde from L-glutamate: step 2/2. Functionally, catalyzes the NADPH-dependent reduction of L-glutamate 5-phosphate into L-glutamate 5-semialdehyde and phosphate. The product spontaneously undergoes cyclization to form 1-pyrroline-5-carboxylate. The polypeptide is Gamma-glutamyl phosphate reductase (Bacillus velezensis (strain DSM 23117 / BGSC 10A6 / LMG 26770 / FZB42) (Bacillus amyloliquefaciens subsp. plantarum)).